The sequence spans 326 residues: Toluene-4-monooxygenase system, ferredoxin--NAD(+) reductase component (326 aa).

The 92-residue stretch at 1–92 folds into the 2Fe-2S ferredoxin-type domain; that stretch reads MFNIQSDDLL…DLKIKVINRA (92 aa). Residues C36, C41, C44, and C76 each contribute to the [2Fe-2S] cluster site. A ferredoxin-reductase region spans residues 95 to 326; it reads RASHPPKRFS…FEAIHFDRFF (232 aa). Residues 100-195 form the FAD-binding FR-type domain; it reads PKRFSTRVVS…DGPYGLSVLK (96 aa). FAD contacts are provided by residues 146–149, 162–164, and 170–172; these read RAYS, IVK, and KVS.

Belongs to the bacterial ring-hydroxylating dioxygenase ferredoxin reductase family. Monomer. The alkene monooxygenase multicomponent enzyme system is composed of an electron transfer component and a monooxygenase component interacting with the effector protein TmoD. The electron transfer component is composed of a ferredoxin reductase (TmoF) and a ferredoxin (TmoC), and the monooxygenase component is formed by a heterohexamer (dimer of heterotrimers) of two alpha subunits (TmoA), two beta subunits (TmoE) and two gamma subunits (TmoB). Requires FAD as cofactor. The cofactor is [2Fe-2S] cluster.

It carries out the reaction 2 reduced [2Fe-2S]-[ferredoxin] + NAD(+) + H(+) = 2 oxidized [2Fe-2S]-[ferredoxin] + NADH. It functions in the pathway xenobiotic degradation; toluene degradation. In terms of biological role, reductase component of the toluene-4-monooxygenase multicomponent enzyme system which catalyzes the O2- and NADH-dependent hydroxylation of toluene to form p-cresol. Ferredoxin reductase catalyzes the transfer of electrons from NADH to ferredoxin (TmoC). This is Toluene-4-monooxygenase system, ferredoxin--NAD(+) reductase component from Ectopseudomonas mendocina (Pseudomonas mendocina).